Consider the following 180-residue polypeptide: NADH-quinone oxidoreductase subunit I (180 aa).

4Fe-4S ferredoxin-type domains are found at residues 48–80 (IVLT…LQKA) and 90–119 (EFFR…LTPD). C60, C63, C66, C70, C99, C102, C105, and C109 together coordinate [4Fe-4S] cluster.

It belongs to the complex I 23 kDa subunit family. As to quaternary structure, NDH-1 is composed of 13 different subunits. Subunits NuoA, H, J, K, L, M, N constitute the membrane sector of the complex. Requires [4Fe-4S] cluster as cofactor.

It localises to the cell inner membrane. It carries out the reaction a quinone + NADH + 5 H(+)(in) = a quinol + NAD(+) + 4 H(+)(out). NDH-1 shuttles electrons from NADH, via FMN and iron-sulfur (Fe-S) centers, to quinones in the respiratory chain. The immediate electron acceptor for the enzyme in this species is believed to be ubiquinone. Couples the redox reaction to proton translocation (for every two electrons transferred, four hydrogen ions are translocated across the cytoplasmic membrane), and thus conserves the redox energy in a proton gradient. This chain is NADH-quinone oxidoreductase subunit I, found in Erwinia tasmaniensis (strain DSM 17950 / CFBP 7177 / CIP 109463 / NCPPB 4357 / Et1/99).